Consider the following 87-residue polypeptide: Small ribosomal subunit protein bS18 (87 aa).

This sequence belongs to the bacterial ribosomal protein bS18 family. In terms of assembly, part of the 30S ribosomal subunit. Forms a tight heterodimer with protein bS6.

Binds as a heterodimer with protein bS6 to the central domain of the 16S rRNA, where it helps stabilize the platform of the 30S subunit. This chain is Small ribosomal subunit protein bS18, found in Sulfurimonas denitrificans (strain ATCC 33889 / DSM 1251) (Thiomicrospira denitrificans (strain ATCC 33889 / DSM 1251)).